The sequence spans 259 residues: Isoprenyl transferase (259 aa).

Residue aspartate 33 is part of the active site. A Mg(2+)-binding site is contributed by aspartate 33. Residues glycine 34–arginine 37, tryptophan 38, histidine 51, and serine 79–glutamate 81 contribute to the substrate site. Residue asparagine 82 is the Proton acceptor of the active site. Residues arginine 86, arginine 208, and arginine 214–serine 216 each bind substrate. Residue glutamate 227 coordinates Mg(2+).

This sequence belongs to the UPP synthase family. As to quaternary structure, homodimer. It depends on Mg(2+) as a cofactor.

Catalyzes the condensation of isopentenyl diphosphate (IPP) with allylic pyrophosphates generating different type of terpenoids. The chain is Isoprenyl transferase from Streptomyces fradiae (Streptomyces roseoflavus).